A 339-amino-acid chain; its full sequence is UDP-N-acetylenolpyruvoylglucosamine reductase (339 aa).

The FAD-binding PCMH-type domain occupies 18–189 (GVEVKAKWFA…LRVRFALNRV (172 aa)). Arg166 is a catalytic residue. Ser239 acts as the Proton donor in catalysis. Glu335 is a catalytic residue.

It belongs to the MurB family. The cofactor is FAD.

It localises to the cytoplasm. The enzyme catalyses UDP-N-acetyl-alpha-D-muramate + NADP(+) = UDP-N-acetyl-3-O-(1-carboxyvinyl)-alpha-D-glucosamine + NADPH + H(+). It functions in the pathway cell wall biogenesis; peptidoglycan biosynthesis. In terms of biological role, cell wall formation. The polypeptide is UDP-N-acetylenolpyruvoylglucosamine reductase (Pseudomonas fluorescens (strain ATCC BAA-477 / NRRL B-23932 / Pf-5)).